A 123-amino-acid polypeptide reads, in one-letter code: Large ribosomal subunit protein bL12 (123 aa).

The protein belongs to the bacterial ribosomal protein bL12 family. As to quaternary structure, homodimer. Part of the ribosomal stalk of the 50S ribosomal subunit. Forms a multimeric L10(L12)X complex, where L10 forms an elongated spine to which 2 to 4 L12 dimers bind in a sequential fashion. Binds GTP-bound translation factors.

Functionally, forms part of the ribosomal stalk which helps the ribosome interact with GTP-bound translation factors. Is thus essential for accurate translation. This Photorhabdus laumondii subsp. laumondii (strain DSM 15139 / CIP 105565 / TT01) (Photorhabdus luminescens subsp. laumondii) protein is Large ribosomal subunit protein bL12.